The chain runs to 608 residues: RAS guanyl-releasing protein 2 (608 aa).

Residues 4–126 (TLDLDKGCTV…SLIDIENVPT (123 aa)) enclose the N-terminal Ras-GEF domain. Phosphoserine occurs at positions 116, 117, and 147. Positions 154–387 (EPLELAAHLT…YQLSLQREPR (234 aa)) constitute a Ras-GEF domain. A disordered region spans residues 382–407 (LQREPRSKSSPTSPTTCTPPPRPPVL). EF-hand domains lie at 426 to 461 (HIEKMVESVFRNFDVDGDGHISQEEFQIIRGNFPYL) and 463 to 490 (AFGDLDQNQDGCISKEEMVSYFLRSSSM). Residues aspartate 439, aspartate 441, aspartate 443, histidine 445, glutamate 450, aspartate 468, asparagine 470, aspartate 472, cysteine 474, and glutamate 479 each coordinate Ca(2+). The segment at 498-548 (VHNFHESNSLRPVACRHCKALILGIYKQGLKCRACGVNCHKQCKDRLSVEC) adopts a Phorbol-ester/DAG-type zinc-finger fold. Phosphoserine is present on residues serine 554 and serine 575. Positions 556–591 (SLEGSAPSPSPTHTHHRAFSFSLPRPGRRGSRPPEI) are disordered.

Belongs to the RASGRP family. Forms a signaling complex with RAP1 and BRAF. Interacts with RAP1. Interacts with F-actin.

Its subcellular location is the cytoplasm. The protein resides in the cytosol. It localises to the cell membrane. The protein localises to the synapse. It is found in the synaptosome. Its subcellular location is the cell projection. The protein resides in the ruffle membrane. In terms of biological role, functions as a calcium- and DAG-regulated nucleotide exchange factor specifically activating Rap through the exchange of bound GDP for GTP. May also activate other GTPases such as RRAS, RRAS2, NRAS, KRAS but not HRAS. Functions in aggregation of platelets and adhesion of T-lymphocytes and neutrophils probably through inside-out integrin activation. May function in the muscarinic acetylcholine receptor M1/CHRM1 signaling pathway. This is RAS guanyl-releasing protein 2 (RASGRP2) from Bos taurus (Bovine).